Here is a 365-residue protein sequence, read N- to C-terminus: UDP-N-acetylglucosamine--N-acetylmuramyl-(pentapeptide) pyrophosphoryl-undecaprenol N-acetylglucosamine transferase (365 aa).

UDP-N-acetyl-alpha-D-glucosamine is bound by residues 17–19 (TGG), Asn-129, Arg-167, Ser-194, Ile-250, 269–274 (ALTVSE), and Gln-295.

It belongs to the glycosyltransferase 28 family. MurG subfamily.

It is found in the cell inner membrane. The catalysed reaction is di-trans,octa-cis-undecaprenyl diphospho-N-acetyl-alpha-D-muramoyl-L-alanyl-D-glutamyl-meso-2,6-diaminopimeloyl-D-alanyl-D-alanine + UDP-N-acetyl-alpha-D-glucosamine = di-trans,octa-cis-undecaprenyl diphospho-[N-acetyl-alpha-D-glucosaminyl-(1-&gt;4)]-N-acetyl-alpha-D-muramoyl-L-alanyl-D-glutamyl-meso-2,6-diaminopimeloyl-D-alanyl-D-alanine + UDP + H(+). The protein operates within cell wall biogenesis; peptidoglycan biosynthesis. Functionally, cell wall formation. Catalyzes the transfer of a GlcNAc subunit on undecaprenyl-pyrophosphoryl-MurNAc-pentapeptide (lipid intermediate I) to form undecaprenyl-pyrophosphoryl-MurNAc-(pentapeptide)GlcNAc (lipid intermediate II). The polypeptide is UDP-N-acetylglucosamine--N-acetylmuramyl-(pentapeptide) pyrophosphoryl-undecaprenol N-acetylglucosamine transferase (Shewanella halifaxensis (strain HAW-EB4)).